A 334-amino-acid chain; its full sequence is Ferric enterobactin transport system permease protein FepD (334 aa).

Residues 1–9 (MSGSVAVTR) are Periplasmic-facing. Residues 10–30 (AIAVPGLLLLLIIATALSLLI) traverse the membrane as a helical segment. Residues 31–63 (GAKSLPASVVLEAFSGTCQSADCTIVLDARLPR) are Cytoplasmic-facing. Residues 64–84 (TLAGLLAGGALGLAGALMQTL) traverse the membrane as a helical segment. The Periplasmic portion of the chain corresponds to 85-92 (TRNPLADP). Residues 93–113 (GLLGVNAGASFAIVLGAALFG) traverse the membrane as a helical segment. Residues 114-120 (YSSAQEQ) are Cytoplasmic-facing. A helical transmembrane segment spans residues 121-141 (LAMAFAGALVASLIVAFTGSQ). The Periplasmic segment spans residues 142–151 (GGGQLSPVRL). A helical membrane pass occupies residues 152 to 172 (TLAGVALAAVLEGLTSGIALL). Residues 173–192 (NPDVYDQLRFWQAGSLDIRN) are Cytoplasmic-facing. Residues 193–213 (LHTLKVVLIPVLIAGATALLL) traverse the membrane as a helical segment. At 214-241 (SRALNSLSLGSDTATALGSRVARTQLIG) the chain is on the periplasmic side. The chain crosses the membrane as a helical span at residues 242–262 (LLAITVLCGSATAIVGPIAFI). The Cytoplasmic segment spans residues 263–279 (GLMMPHMARWLVGADHR). A helical transmembrane segment spans residues 280-300 (WSLPVTLLATPALLLFADIIG). The Periplasmic portion of the chain corresponds to 301-305 (RVIVP). A helical transmembrane segment spans residues 306 to 326 (GELRVSVVSAFIGAPVLIFLV). The Cytoplasmic portion of the chain corresponds to 327-334 (RRKTRGGA).

The protein belongs to the binding-protein-dependent transport system permease family. FecCD subfamily. In terms of assembly, the complex is composed of two ATP-binding proteins (FepC), two transmembrane proteins (FepD and FepG) and a solute-binding protein (FepB).

The protein resides in the cell inner membrane. Its function is as follows. Part of the ABC transporter complex FepBDGC involved in ferric enterobactin uptake. Responsible for the translocation of the substrate across the membrane. This chain is Ferric enterobactin transport system permease protein FepD (fepD), found in Escherichia coli (strain K12).